We begin with the raw amino-acid sequence, 436 residues long: Kynureninase (436 aa).

Pyridoxal 5'-phosphate is bound by residues Leu-88, Thr-89, 116–119 (FPSD), Asp-202, His-205, and Tyr-227. Lys-228 is modified (N6-(pyridoxal phosphate)lysine). Pyridoxal 5'-phosphate contacts are provided by Trp-280 and Asn-308.

The protein belongs to the kynureninase family. As to quaternary structure, homodimer. Pyridoxal 5'-phosphate is required as a cofactor.

It localises to the cytoplasm. The catalysed reaction is L-kynurenine + H2O = anthranilate + L-alanine + H(+). The enzyme catalyses 3-hydroxy-L-kynurenine + H2O = 3-hydroxyanthranilate + L-alanine + H(+). The protein operates within amino-acid degradation; L-kynurenine degradation; L-alanine and anthranilate from L-kynurenine: step 1/1. It participates in cofactor biosynthesis; NAD(+) biosynthesis; quinolinate from L-kynurenine: step 2/3. Catalyzes the cleavage of L-kynurenine (L-Kyn) and L-3-hydroxykynurenine (L-3OHKyn) into anthranilic acid (AA) and 3-hydroxyanthranilic acid (3-OHAA), respectively. The sequence is that of Kynureninase from Schistosoma japonicum (Blood fluke).